Consider the following 274-residue polypeptide: Acyl-[acyl-carrier-protein]--UDP-N-acetylglucosamine O-acyltransferase (274 aa).

This sequence belongs to the transferase hexapeptide repeat family. LpxA subfamily. Homotrimer.

Its subcellular location is the cytoplasm. The catalysed reaction is a (3R)-hydroxyacyl-[ACP] + UDP-N-acetyl-alpha-D-glucosamine = a UDP-3-O-[(3R)-3-hydroxyacyl]-N-acetyl-alpha-D-glucosamine + holo-[ACP]. Its pathway is glycolipid biosynthesis; lipid IV(A) biosynthesis; lipid IV(A) from (3R)-3-hydroxytetradecanoyl-[acyl-carrier-protein] and UDP-N-acetyl-alpha-D-glucosamine: step 1/6. Its function is as follows. Involved in the biosynthesis of lipid A, a phosphorylated glycolipid that anchors the lipopolysaccharide to the outer membrane of the cell. This Bartonella quintana (strain Toulouse) (Rochalimaea quintana) protein is Acyl-[acyl-carrier-protein]--UDP-N-acetylglucosamine O-acyltransferase.